Here is a 406-residue protein sequence, read N- to C-terminus: Tryptophan 2,3-dioxygenase (406 aa).

S19 carries the phosphoserine modification. Residues 72–76 (FIITH) and R144 contribute to the substrate site. Residue H328 participates in heme binding. T342 lines the substrate pocket.

Belongs to the tryptophan 2,3-dioxygenase family. As to quaternary structure, homotetramer. Dimer of dimers. Heme serves as cofactor.

The catalysed reaction is L-tryptophan + O2 = N-formyl-L-kynurenine. Its pathway is amino-acid degradation; L-tryptophan degradation via kynurenine pathway; L-kynurenine from L-tryptophan: step 1/2. In terms of biological role, heme-dependent dioxygenase that catalyzes the oxidative cleavage of the L-tryptophan (L-Trp) pyrrole ring and converts L-tryptophan to N-formyl-L-kynurenine. Catalyzes the oxidative cleavage of the indole moiety. This chain is Tryptophan 2,3-dioxygenase, found in Bos taurus (Bovine).